The primary structure comprises 383 residues: MAYLSFKSNMERTPRESNTPCPPPQPSPSLFSSLPDDIVLNILARISTSYYQTLSLVSKTFRLLILSKELDMERSYLGTRKPCVYVCLQSPTHPFDRRWFGLWIKPYDHQPLTHWTIDIKCTGHWLLPMPSPYSRCLQIVHETVGSETYEIGGQNMTPSTDVWVYDKLIGKQRKAPSMMVARKNAFTCVLDGKLYVMGGCEADESTHWAEVFDPKTQTWEALPDPGVELRYSSVKNIQTKQGKVYVRSNKKNFVYLIKECMWEVAEENLGESTCEIENVCYCYSNKRYWWYDAKCEEWRLVKGVSGLYEYYKTDSEIGNYGGKLVVFWDRAVSRLTATKEIWCAMISLEKGHDGEIWGHIEWLDAVLIAPRSYALSHCMDFLQ.

The segment at 1-27 is disordered; it reads MAYLSFKSNMERTPRESNTPCPPPQPS. Residues 28–79 enclose the F-box domain; that stretch reads PSLFSSLPDDIVLNILARISTSYYQTLSLVSKTFRLLILSKELDMERSYLGT. 3 Kelch repeats span residues 147-192, 193-239, and 272-318; these read ETYE…VLDG, KLYV…NIQT, and STCE…SEIG.

Involved in seed germination. This is F-box/kelch-repeat protein At4g19330 from Arabidopsis thaliana (Mouse-ear cress).